Consider the following 565-residue polypeptide: Frizzled-2 (565 aa).

The first 23 residues, 1-23 (MRPRSALPRLLLPLLLLPAAGPA), serve as a signal peptide directing secretion. The Extracellular portion of the chain corresponds to 24-247 (QFHGEKGISI…QEETRFARLW (224 aa)). The region spanning 34–153 (PDHGFCQPIS…HGAEQICVGQ (120 aa)) is the FZ domain. 5 cysteine pairs are disulfide-bonded: cysteine 39-cysteine 100, cysteine 47-cysteine 93, cysteine 84-cysteine 121, cysteine 110-cysteine 150, and cysteine 114-cysteine 138. The N-linked (GlcNAc...) asparagine glycan is linked to asparagine 53. N-linked (GlcNAc...) asparagine glycosylation is present at asparagine 154. A disordered region spans residues 160–189 (APALLTTAPPPGLQPGAGGTPGGPGGGGAP). The segment covering 174 to 188 (PGAGGTPGGPGGGGA) has biased composition (gly residues). Residues 248 to 268 (ILTWSVLCCASTFFTVTTYLV) form a helical membrane-spanning segment. Residues 269 to 279 (DMQRFRYPERP) lie on the Cytoplasmic side of the membrane. A helical transmembrane segment spans residues 280-300 (IIFLSGCYTMVSVAYIAGFVL). The Extracellular portion of the chain corresponds to 301 to 327 (QERVVCNERFSEDGYRTVVQGTKKEGC). Residues 328–348 (TILFMMLYFFSMASSIWWVIL) traverse the membrane as a helical segment. Residues 349–370 (SLTWFLAAGMKWGHEAIEANSQ) lie on the Cytoplasmic side of the membrane. The chain crosses the membrane as a helical span at residues 371 to 391 (YFHLAAWAVPAVKTITILAMG). Residues 392 to 414 (QIDGDLLSGVCFVGLNSLDPLRG) are Extracellular-facing. The chain crosses the membrane as a helical span at residues 415 to 435 (FVLAPLFVYLFIGTSFLLAGF). Residues 436-461 (VSLFRIRTIMKHDGTKTEKLERLMVR) are Cytoplasmic-facing. Residues 462 to 482 (IGVFSVLYTVPATIVIACYFY) traverse the membrane as a helical segment. Topologically, residues 483 to 519 (EQAFREHWERSWVSQHCKSLAIPCPAHYTPRMSPDFT) are extracellular. A helical membrane pass occupies residues 520-540 (VYMIKYLMTLIVGITSGFWIW). At 541–565 (SGKTLHSWRKFYTRLTNSRHGETTV) the chain is on the cytoplasmic side. The short motif at 543 to 548 (KTLHSW) is the Lys-Thr-X-X-X-Trp motif, mediates interaction with the PDZ domain of Dvl family members element. Residues 563-565 (TTV) carry the PDZ-binding motif.

The protein belongs to the G-protein coupled receptor Fz/Smo family. (Microbial infection) Interacts with C.difficile toxin TcdB; frizzled receptors constitute the major host receptors for TcdB in the colonic epithelium. Ubiquitinated by ZNRF3, leading to its degradation by the proteasome. In terms of tissue distribution, widely expressed. In the adult, mainly found in heart, placenta, skeletal muscle, lung, kidney, pancreas, prostate, testis, ovary and colon. In the fetus, expressed in brain, lung and kidney. Low levels in fetal liver.

The protein resides in the membrane. The protein localises to the cell membrane. Its function is as follows. Receptor for Wnt proteins. Most of frizzled receptors are coupled to the beta-catenin canonical signaling pathway, which leads to the activation of disheveled proteins, inhibition of GSK-3 kinase, nuclear accumulation of beta-catenin and activation of Wnt target genes. A second signaling pathway involving PKC and calcium fluxes has been seen for some family members, but it is not yet clear if it represents a distinct pathway or if it can be integrated in the canonical pathway, as PKC seems to be required for Wnt-mediated inactivation of GSK-3 kinase. Both pathways seem to involve interactions with G-proteins. May be involved in transduction and intercellular transmission of polarity information during tissue morphogenesis and/or in differentiated tissues. In terms of biological role, (Microbial infection) Acts as a receptor for C.difficile toxin TcdB in the colonic epithelium. TcdB occupies the binding site for Wnt-adducted palmitoleate in frizzled receptors and TcdB-binding prevents Wnt-binding and downstream Wnt signaling. This Homo sapiens (Human) protein is Frizzled-2 (FZD2).